The following is a 199-amino-acid chain: Superoxide dismutase [Fe] (199 aa).

Positions 28, 80, 162, and 166 each coordinate Fe cation.

Belongs to the iron/manganese superoxide dismutase family. Homodimer. The cofactor is Fe cation.

The protein resides in the cytoplasm. The catalysed reaction is 2 superoxide + 2 H(+) = H2O2 + O2. Its function is as follows. Destroys superoxide anion radicals which are normally produced within the cells and which are toxic to biological systems. This is Superoxide dismutase [Fe] (sodB) from Leptolyngbya boryana (Plectonema boryanum).